The chain runs to 301 residues: Formylmethanofuran--tetrahydromethanopterin formyltransferase-like protein (301 aa).

It belongs to the FTR family.

This chain is Formylmethanofuran--tetrahydromethanopterin formyltransferase-like protein, found in Archaeoglobus fulgidus (strain ATCC 49558 / DSM 4304 / JCM 9628 / NBRC 100126 / VC-16).